Here is a 606-residue protein sequence, read N- to C-terminus: Thrombospondin-related anonymous protein (606 aa).

The first 24 residues, 1 to 24 (MKLLGNSKYFFVVLLLCISVFLNG), serve as a signal peptide directing secretion. One can recognise a VWFA domain in the interval 43-228 (DLHILLDGSG…TMIKPFLSKV (186 aa)). The region spanning 235 to 281 (VALCGKWEEWSECSTTCDNGTKIRKRKVLHPNCAGEMTAPCKVRDCP) is the TSP type-1 domain. The segment at 301–541 (PVEPIEPAEP…SKKQSKSNNG (241 aa)) is disordered. Low complexity-rich tracts occupy residues 409–425 (ENPF…IIAP), 440–450 (ELPNNLPESPS), and 459–479 (PNDN…IPNK). Composition is skewed to basic and acidic residues over residues 487-504 (NPYK…RSND) and 516-532 (DKLE…ENKS). A helical transmembrane segment spans residues 544-564 (IAGGIIGGLAIIGCIGVGYNF).

In terms of assembly, interacts (via integrin-like A-domain) with Anopheles gambiae saglin/SG1F; the interaction probably promotes sporozoite invasion of salivary gland. Interacts (via integrin-like A-domain) with human AHSG; the interaction promotes sporozoite invasion of hepatocytes and formation of exoerythrocytic forms of parasites in human hepatoma HepG2 cells.

It is found in the cell membrane. The protein resides in the cytoplasm. Its function is as follows. Promotes parasite ability to invade host hepatocytes. Promotes parasite ability to invade mosquito salivary glands. Required for sporozoite gliding motility. This chain is Thrombospondin-related anonymous protein, found in Plasmodium berghei (strain Anka).